The primary structure comprises 572 residues: Phosphoglucomutase-2 (572 aa).

Substrate-binding positions include Thr23, Arg27, 126–127 (SH), and Lys140. Ser126 serves as the catalytic Phosphoserine intermediate. Mg(2+) is bound at residue Ser126. Asp308, Asp310, and Asp312 together coordinate Mg(2+). Substrate-binding positions include 312–313 (DR), Thr373, 392–394 (EES), Lys405, and Arg527.

This sequence belongs to the phosphohexose mutase family. Requires Mg(2+) as cofactor. Post-translationally, phosphorylated via a calcium-dependent protein kinase.

The protein resides in the cytoplasm. It carries out the reaction alpha-D-glucose 1-phosphate = alpha-D-glucose 6-phosphate. May be involved in membrane fusion in exocytosis. This is Phosphoglucomutase-2 (pp63-2) from Paramecium tetraurelia.